The primary structure comprises 365 residues: Caffeic acid 3-O-methyltransferase (365 aa).

130 to 136 (MNQDKVL) contacts substrate. The interval 162-180 (AFDYHGTDPRFNKVFNKGM) is substrate binding. S-adenosyl-L-methionine contacts are provided by G208, D231, D251, M252, and K265. H269 (proton acceptor) is an active-site residue.

The protein belongs to the class I-like SAM-binding methyltransferase superfamily. Cation-independent O-methyltransferase family. COMT subfamily. As to quaternary structure, homodimer.

It carries out the reaction (E)-caffeate + S-adenosyl-L-methionine = (E)-ferulate + S-adenosyl-L-homocysteine + H(+). It participates in aromatic compound metabolism; phenylpropanoid biosynthesis. In terms of biological role, catalyzes the conversion of caffeic acid to ferulic acid and of 5-hydroxyferulic acid to sinapic acid. The resulting products may subsequently be converted to the corresponding alcohols that are incorporated into lignins. In Rosa chinensis (China rose), this protein is Caffeic acid 3-O-methyltransferase (COMT1).